An 84-amino-acid polypeptide reads, in one-letter code: Putative regulatory protein Hore_09800 (84 aa).

Belongs to the RemA family.

The chain is Putative regulatory protein Hore_09800 from Halothermothrix orenii (strain H 168 / OCM 544 / DSM 9562).